A 1022-amino-acid chain; its full sequence is Protein trachealess (1022 aa).

Residues 86–139 (LRKEKSRDAARSRRGKENYEFYELAKMLPLPAAITSQLDKASIIRLTISYLKLR) form the bHLH domain. The PAS 1 domain maps to 174–244 (EQHQGTHILQ…DQLGLSLTSG (71 aa)). The interval 239-289 (LSLTSGGGGGGGSSSSGGGGGGAGGGMASPTSGASDDGSGTHGTNNPDVAA) is disordered. The span at 243-265 (SGGGGGGGSSSSGGGGGGAGGGM) shows a compositional bias: gly residues. The span at 280–289 (HGTNNPDVAA) shows a compositional bias: polar residues. Residues 391 to 461 (PPPSVHEIRL…KSHSDLIEKG (71 aa)) form the PAS 2 domain. One can recognise a PAC domain in the interval 465–508 (TGYYRLMNKSGGYTWLQTCATVVCSTKNADEQNIICVNYVISNR). Disordered regions lie at residues 525–686 (DSIK…ADSA), 849–896 (AMTP…GDVV), and 962–996 (DDQGQVPPSCQDQYHHHHHHHHHQDGSAGSSASQA). Composition is skewed to low complexity over residues 578–587 (RSAAASHGSS) and 611–625 (PTTVATPVPAATPPV). The Nuclear localization signal signature appears at 629-636 (KRKRKTKA). A Phosphoserine; by PKB/Akt1 modification is found at Ser673. A compositionally biased stretch (polar residues) spans 851-864 (TPPSSVSPRDSNQP). A compositionally biased stretch (low complexity) spans 987-996 (GSAGSSASQA).

In terms of assembly, efficient DNA binding requires dimerization with another bHLH protein. Heterodimer with tgo. Ser-673 phosphorylation by PKB/Akt1 is required for nuclear targeting and transcriptional activity. Trachea, salivary gland ducts, posterior spiracles (Filzkoeper primordia) and a subset of cells in the CNS.

It localises to the nucleus. Its function is as follows. Transcription factor, master regulator of tracheal cell fates in the embryo, necessary for the development of the salivary gland duct, Malpighian tubules and the posterior spiracles. It may induce a general fate of branched tubular structures of epithelial origin. Functions with tgo to regulate expression of btl. This is Protein trachealess (trh) from Drosophila melanogaster (Fruit fly).